The primary structure comprises 320 residues: Phosphate acetyltransferase (320 aa).

This sequence belongs to the phosphate acetyltransferase and butyryltransferase family.

It localises to the cytoplasm. It catalyses the reaction acetyl-CoA + phosphate = acetyl phosphate + CoA. It participates in metabolic intermediate biosynthesis; acetyl-CoA biosynthesis; acetyl-CoA from acetate: step 2/2. The chain is Phosphate acetyltransferase (pta) from Mycoplasma genitalium (strain ATCC 33530 / DSM 19775 / NCTC 10195 / G37) (Mycoplasmoides genitalium).